The sequence spans 290 residues: Protease HtpX (290 aa).

Helical transmembrane passes span 12-32 (IAVMVLISLVFSLFGFQGLLA) and 42-62 (ALLVYSAVIGFSGSIISLLIS). Histidine 147 serves as a coordination point for Zn(2+). Glutamate 148 is a catalytic residue. Histidine 151 is a Zn(2+) binding site. 2 helical membrane-spanning segments follow: residues 162–182 (LIQGVLNTFVVFLSRVIGHVV) and 197–217 (FWIVSIISQVILGILASMIVM). Glutamate 224 provides a ligand contact to Zn(2+).

Belongs to the peptidase M48B family. It depends on Zn(2+) as a cofactor.

The protein resides in the cell inner membrane. The chain is Protease HtpX from Pseudoalteromonas atlantica (strain T6c / ATCC BAA-1087).